The sequence spans 313 residues: Homoserine O-succinyltransferase (313 aa).

Cysteine 142 acts as the Acyl-thioester intermediate in catalysis. Residues lysine 163 and serine 192 each contribute to the substrate site. The active-site Proton acceptor is the histidine 235. Glutamate 237 is a catalytic residue. A substrate-binding site is contributed by arginine 249.

This sequence belongs to the MetA family.

Its subcellular location is the cytoplasm. The enzyme catalyses L-homoserine + succinyl-CoA = O-succinyl-L-homoserine + CoA. It participates in amino-acid biosynthesis; L-methionine biosynthesis via de novo pathway; O-succinyl-L-homoserine from L-homoserine: step 1/1. In terms of biological role, transfers a succinyl group from succinyl-CoA to L-homoserine, forming succinyl-L-homoserine. This Shewanella sp. (strain ANA-3) protein is Homoserine O-succinyltransferase.